A 252-amino-acid chain; its full sequence is tRNA (guanine-N(7)-)-methyltransferase (252 aa).

S-adenosyl-L-methionine-binding residues include E75, E100, D127, and D150. The active site involves D150. Residue K154 coordinates substrate. Residues 156–161 (RHNKRR) form an interaction with RNA region. Residues D186 and 223-226 (THFE) contribute to the substrate site.

The protein belongs to the class I-like SAM-binding methyltransferase superfamily. TrmB family.

It catalyses the reaction guanosine(46) in tRNA + S-adenosyl-L-methionine = N(7)-methylguanosine(46) in tRNA + S-adenosyl-L-homocysteine. Its pathway is tRNA modification; N(7)-methylguanine-tRNA biosynthesis. Functionally, catalyzes the formation of N(7)-methylguanine at position 46 (m7G46) in tRNA. The protein is tRNA (guanine-N(7)-)-methyltransferase of Xanthomonas oryzae pv. oryzae (strain MAFF 311018).